We begin with the raw amino-acid sequence, 189 residues long: Hypoxanthine/guanine phosphoribosyltransferase (189 aa).

The protein belongs to the purine/pyrimidine phosphoribosyltransferase family. Archaeal HPRT subfamily. As to quaternary structure, homodimer.

The protein resides in the cytoplasm. The catalysed reaction is IMP + diphosphate = hypoxanthine + 5-phospho-alpha-D-ribose 1-diphosphate. It catalyses the reaction GMP + diphosphate = guanine + 5-phospho-alpha-D-ribose 1-diphosphate. The protein operates within purine metabolism; IMP biosynthesis via salvage pathway; IMP from hypoxanthine: step 1/1. Functionally, catalyzes a salvage reaction resulting in the formation of IMP that is energically less costly than de novo synthesis. The sequence is that of Hypoxanthine/guanine phosphoribosyltransferase from Methanothermus fervidus (strain ATCC 43054 / DSM 2088 / JCM 10308 / V24 S).